Here is an 885-residue protein sequence, read N- to C-terminus: Protein arg11, mitochondrial (885 aa).

The transit peptide at methionine 1–glutamate 59 directs the protein to the mitochondrion. The 154-residue stretch at phenylalanine 346–isoleucine 499 folds into the N-acetyltransferase domain. The span at serine 503–glutamine 523 shows a compositional bias: low complexity. The tract at residues serine 503 to leucine 532 is disordered. The active site involves cysteine 703.

The protein in the N-terminal section; belongs to the acetylglutamate kinase family. In the C-terminal section; belongs to the NAGSA dehydrogenase family. In terms of processing, the protein precursor is probably cleaved into the two biologically active enzymes, the kinase and the reductase.

Its subcellular location is the mitochondrion. It carries out the reaction N-acetyl-L-glutamate 5-semialdehyde + phosphate + NADP(+) = N-acetyl-L-glutamyl 5-phosphate + NADPH + H(+). The catalysed reaction is N-acetyl-L-glutamate + ATP = N-acetyl-L-glutamyl 5-phosphate + ADP. Its pathway is amino-acid biosynthesis; L-arginine biosynthesis; N(2)-acetyl-L-ornithine from L-glutamate: step 2/4. It functions in the pathway amino-acid biosynthesis; L-arginine biosynthesis; N(2)-acetyl-L-ornithine from L-glutamate: step 3/4. Its activity is regulated as follows. The kinase activity is inhibited by arginine. The sequence is that of Protein arg11, mitochondrial (arg11) from Schizosaccharomyces pombe (strain 972 / ATCC 24843) (Fission yeast).